The primary structure comprises 108 residues: Thioredoxin (108 aa).

The Thioredoxin domain occupies 2–108; sequence GKYFEATDKN…IAKKIDEHIG (107 aa). An intrachain disulfide couples Cys-32 to Cys-35.

The protein belongs to the thioredoxin family.

Participates in various redox reactions through the reversible oxidation of its active center dithiol to a disulfide and catalyzes dithiol-disulfide exchange reactions. In Chlorobaculum thiosulfatiphilum (Chlorobium limicola f.sp. thiosulfatophilum), this protein is Thioredoxin (trxA).